A 2081-amino-acid polypeptide reads, in one-letter code: Non-reducing polyketide synthase terA (2081 aa).

The tract at residues 85–190 (TLTLAFRIGV…ISLDIFAPFH (106 aa)) is N-terminal acylcarrier protein transacylase (SAT) domain (SAT). Positions 316–749 (AQKIAIVGMA…GGNTGLLLED (434 aa)) constitute a Ketosynthase family 3 (KS3) domain. Residues Cys488, His623, and His667 each act as for beta-ketoacyl synthase activity in the active site. The interval 849 to 1147 (LFTGQGSHYT…LTLPSLRKQE (299 aa)) is malonyl-CoA:ACP transacylase (MAT) domain. Residues 1230-1364 (QKVIKEDFGQ…CHVEYGDIKT (135 aa)) are N-terminal hotdog fold. Residues 1230-1539 (QKVIKEDFGQ…FKAIPRAVIN (310 aa)) form the PKS/mFAS DH domain. The product template (PT) domain stretch occupies residues 1259-1536 (VTGHLVNGSA…GVKFKAIPRA (278 aa)). His1262 serves as the catalytic Proton acceptor; for dehydratase activity. The segment at 1392-1539 (YQKLDRKAAY…FKAIPRAVIN (148 aa)) is C-terminal hotdog fold. The Proton donor; for dehydratase activity role is filled by Asp1452. The interval 1549–1578 (KALEKSAPRQNPKATATKTTQKPQAPVPVP) is disordered. A compositionally biased stretch (low complexity) spans 1558–1572 (QNPKATATKTTQKPQ). In terms of domain architecture, Carrier 1 spans 1580 to 1658 (KQNKAIIDDF…QVKELILKLA (79 aa)). An O-(pantetheine 4'-phosphoryl)serine modification is found at Ser1617. The interval 1659-1700 (GSSSDENTTDTPDEEEDPATADADNTEMIRENPLESVSPNVS) is disordered. Residues 1665 to 1677 (NTTDTPDEEEDPA) are compositionally biased toward acidic residues. One can recognise a Carrier 2 domain in the interval 1699-1776 (VSSSEAMDGF…QARLAIASLM (78 aa)). The residue at position 1736 (Ser1736) is an O-(pantetheine 4'-phosphoryl)serine. The tract at residues 1783–1809 (GATTPYSGSDDAKSSTSSLTAGSVLTP) is disordered. The thioesterase (TE) domain stretch occupies residues 1840–2070 (TLFLLPDGSG…TMMREPKVNQ (231 aa)).

The enzyme catalyses 3 malonyl-CoA + acetyl-CoA + 2 H(+) = orsellinate + 3 CO2 + 4 CoA. Its pathway is secondary metabolite biosynthesis. In terms of biological role, non-reducing polyketide synthase; part of the gene cluster that mediates the biosynthesis of terrein, a fungal metabolite with ecological, antimicrobial, antiproliferative, and antioxidative activities. The first step in the pathway is performed by the polyketide synthase terA that produces 4-hydroxy-6-methylpyranon (4-HMP), orsellinic acid (OA), and 2,3-dehydro-6-hydroxymellein (2,3-dehydro-6-HM) by condensing acetyl-CoA with two, three, or four malonyl-CoA units, respectively. 4-HMP and OA are not pathway intermediates, but are rather shunt or side products. 2,3-dehydro-6-HM is further converted to 6-hydroxymellein (6-HM) by the 6-hydroxymellein synthase terB. The monooxygenases terC and terD, the multicopper oxidase terE and the Kelch-like protein terF are then involved in the transformation of 6-HM to terrein. Even if they are co-regulated with the other terrein cluster genes, terH and terI seem to be dispensable for terrein production; whereas one or both of the 2 transporters terG and terJ are probably required for efficient secretion of metabolites. This chain is Non-reducing polyketide synthase terA, found in Aspergillus terreus (strain NIH 2624 / FGSC A1156).